The following is a 180-amino-acid chain: MQTRLVLLLLALTPLVLAKKFKEEEKPAWAKKDIRDYSEADLERLLDQWEEDEEPLEDDELPEHLRPQPKLDLSNLDSKSPEDLLKVSKKGRTLMTFVSVTGNPTREESDTITKLWQTSLWNNHIQAERYMVDDNRAIFLFKDGTQAWDAKDFLIEQERCKGVTIENKEYPGVNAKKDEL.

The first 18 residues, 1-18 (MQTRLVLLLLALTPLVLA), serve as a signal peptide directing secretion. Residues 48–61 (QWEEDEEPLEDDEL) show a composition bias toward acidic residues. Residues 48-78 (QWEEDEEPLEDDELPEHLRPQPKLDLSNLDS) form a disordered region. Positions 93-166 (TLMTFVSVTG…QERCKGVTIE (74 aa)) are structured core. The short motif at 177 to 180 (KDEL) is the Prevents secretion from ER element.

The protein belongs to the MESD family. Monomer. Interacts with Arrow and Yolkless.

It localises to the endoplasmic reticulum. Chaperone specifically assisting the folding of beta-propeller/EGF modules within the family of low-density lipoprotein receptors (LDLRs). Acts as a modulator of the Wg pathway, since some LDLRs are coreceptors for the canonical Wnt pathway. The chain is LDLR chaperone boca (boca) from Drosophila melanogaster (Fruit fly).